We begin with the raw amino-acid sequence, 128 residues long: Phosphoribosyl-AMP cyclohydrolase (128 aa).

D94 provides a ligand contact to Mg(2+). C95 is a binding site for Zn(2+). Positions 96 and 98 each coordinate Mg(2+). Zn(2+) is bound by residues C111 and C118.

The protein belongs to the PRA-CH family. Homodimer. It depends on Mg(2+) as a cofactor. Zn(2+) serves as cofactor.

It localises to the cytoplasm. The enzyme catalyses 1-(5-phospho-beta-D-ribosyl)-5'-AMP + H2O = 1-(5-phospho-beta-D-ribosyl)-5-[(5-phospho-beta-D-ribosylamino)methylideneamino]imidazole-4-carboxamide. Its pathway is amino-acid biosynthesis; L-histidine biosynthesis; L-histidine from 5-phospho-alpha-D-ribose 1-diphosphate: step 3/9. Catalyzes the hydrolysis of the adenine ring of phosphoribosyl-AMP. This Streptomyces coelicolor (strain ATCC BAA-471 / A3(2) / M145) protein is Phosphoribosyl-AMP cyclohydrolase.